Consider the following 405-residue polypeptide: Arginine biosynthesis bifunctional protein ArgJ (405 aa).

Substrate-binding residues include T152, K178, T189, E276, N400, and T405. Catalysis depends on T189, which acts as the Nucleophile.

The protein belongs to the ArgJ family. Heterotetramer of two alpha and two beta chains.

It is found in the cytoplasm. It catalyses the reaction N(2)-acetyl-L-ornithine + L-glutamate = N-acetyl-L-glutamate + L-ornithine. The catalysed reaction is L-glutamate + acetyl-CoA = N-acetyl-L-glutamate + CoA + H(+). It functions in the pathway amino-acid biosynthesis; L-arginine biosynthesis; L-ornithine and N-acetyl-L-glutamate from L-glutamate and N(2)-acetyl-L-ornithine (cyclic): step 1/1. The protein operates within amino-acid biosynthesis; L-arginine biosynthesis; N(2)-acetyl-L-ornithine from L-glutamate: step 1/4. Catalyzes two activities which are involved in the cyclic version of arginine biosynthesis: the synthesis of N-acetylglutamate from glutamate and acetyl-CoA as the acetyl donor, and of ornithine by transacetylation between N(2)-acetylornithine and glutamate. In Pseudomonas aeruginosa (strain ATCC 15692 / DSM 22644 / CIP 104116 / JCM 14847 / LMG 12228 / 1C / PRS 101 / PAO1), this protein is Arginine biosynthesis bifunctional protein ArgJ.